The primary structure comprises 35 residues: Turripeptide gsp9a (35 aa).

4-hydroxyproline is present on residues Pro-3 and Pro-4. Cystine bridges form between Cys-7-Cys-22, Cys-12-Cys-26, and Cys-18-Cys-33. 4-carboxyglutamate occurs at positions 14 and 17.

In terms of tissue distribution, expressed by the venom duct.

Its subcellular location is the secreted. The polypeptide is Turripeptide gsp9a (Gemmula speciosa (Splendid gem-turris)).